The chain runs to 139 residues: ATP synthase epsilon chain (139 aa).

Belongs to the ATPase epsilon chain family. In terms of assembly, F-type ATPases have 2 components, CF(1) - the catalytic core - and CF(0) - the membrane proton channel. CF(1) has five subunits: alpha(3), beta(3), gamma(1), delta(1), epsilon(1). CF(0) has three main subunits: a, b and c.

Its subcellular location is the cell inner membrane. In terms of biological role, produces ATP from ADP in the presence of a proton gradient across the membrane. The chain is ATP synthase epsilon chain (atpC) from Escherichia coli O157:H7.